A 49-amino-acid chain; its full sequence is Large ribosomal subunit protein bL33B (49 aa).

It belongs to the bacterial ribosomal protein bL33 family.

The chain is Large ribosomal subunit protein bL33B (rpmG2) from Lactococcus lactis subsp. lactis (strain IL1403) (Streptococcus lactis).